The following is a 316-amino-acid chain: tRNA dimethylallyltransferase (316 aa).

ATP is bound at residue 17-24; that stretch reads GPTASGKT. 19–24 contributes to the substrate binding site; sequence TASGKT. Interaction with substrate tRNA regions lie at residues 42 to 45, 166 to 170, and 247 to 252; these read DSAL, QRLSR, and RCVGYR.

This sequence belongs to the IPP transferase family. Monomer. It depends on Mg(2+) as a cofactor.

The catalysed reaction is adenosine(37) in tRNA + dimethylallyl diphosphate = N(6)-dimethylallyladenosine(37) in tRNA + diphosphate. In terms of biological role, catalyzes the transfer of a dimethylallyl group onto the adenine at position 37 in tRNAs that read codons beginning with uridine, leading to the formation of N6-(dimethylallyl)adenosine (i(6)A). This Salmonella typhi protein is tRNA dimethylallyltransferase.